We begin with the raw amino-acid sequence, 268 residues long: Ribosomal RNA large subunit methyltransferase E (268 aa).

A disordered region spans residues 1 to 60 (MKPPRSRSGSSKDTGPKRIPGKALKSASNPGENDATLDSATARTARNKTVSLRTARGRTT). The segment covering 26-52 (SASNPGENDATLDSATARTARNKTVSL) has biased composition (polar residues). S-adenosyl-L-methionine contacts are provided by G115, W117, D133, D149, and D173. K213 (proton acceptor) is an active-site residue.

It belongs to the class I-like SAM-binding methyltransferase superfamily. RNA methyltransferase RlmE family.

It localises to the cytoplasm. It carries out the reaction uridine(2552) in 23S rRNA + S-adenosyl-L-methionine = 2'-O-methyluridine(2552) in 23S rRNA + S-adenosyl-L-homocysteine + H(+). In terms of biological role, specifically methylates the uridine in position 2552 of 23S rRNA at the 2'-O position of the ribose in the fully assembled 50S ribosomal subunit. The protein is Ribosomal RNA large subunit methyltransferase E of Gluconobacter oxydans (strain 621H) (Gluconobacter suboxydans).